The following is a 266-amino-acid chain: Dihydropteroate synthase (266 aa).

One can recognise a Pterin-binding domain in the interval alanine 12–alanine 260. Asparagine 19 is a binding site for Mg(2+). (7,8-dihydropterin-6-yl)methyl diphosphate is bound by residues threonine 59, aspartate 93, asparagine 112, aspartate 176, lysine 212, and arginine 248–histidine 250.

The protein belongs to the DHPS family. Homodimer or homotrimer. The cofactor is Mg(2+).

It carries out the reaction (7,8-dihydropterin-6-yl)methyl diphosphate + 4-aminobenzoate = 7,8-dihydropteroate + diphosphate. It functions in the pathway cofactor biosynthesis; tetrahydrofolate biosynthesis; 7,8-dihydrofolate from 2-amino-4-hydroxy-6-hydroxymethyl-7,8-dihydropteridine diphosphate and 4-aminobenzoate: step 1/2. Its function is as follows. Catalyzes the condensation of para-aminobenzoate (pABA) with 6-hydroxymethyl-7,8-dihydropterin diphosphate (DHPt-PP) to form 7,8-dihydropteroate (H2Pte), the immediate precursor of folate derivatives. This chain is Dihydropteroate synthase (folP), found in Streptococcus pyogenes serotype M1.